Here is an 80-residue protein sequence, read N- to C-terminus: Metallothionein-like protein type 2 MET1 (80 aa).

The protein belongs to the metallothionein superfamily. Type 15 family.

Metallothioneins have a high content of cysteine residues that bind various heavy metals. The chain is Metallothionein-like protein type 2 MET1 (MET1) from Fragaria ananassa (Strawberry).